The primary structure comprises 80 residues: Acyl carrier protein (80 aa).

A Carrier domain is found at 2–77 (KNIEERIKKI…KSIDFIQKKN (76 aa)). S37 bears the O-(pantetheine 4'-phosphoryl)serine mark.

It belongs to the acyl carrier protein (ACP) family. In terms of processing, 4'-phosphopantetheine is transferred from CoA to a specific serine of apo-ACP by AcpS. This modification is essential for activity because fatty acids are bound in thioester linkage to the sulfhydryl of the prosthetic group.

It localises to the cytoplasm. It functions in the pathway lipid metabolism; fatty acid biosynthesis. In terms of biological role, carrier of the growing fatty acid chain in fatty acid biosynthesis. The sequence is that of Acyl carrier protein from Buchnera aphidicola subsp. Acyrthosiphon pisum (strain APS) (Acyrthosiphon pisum symbiotic bacterium).